Here is a 318-residue protein sequence, read N- to C-terminus: MTYRSIGSTAYPTIGVVLLGGIANPVTRTPLHTSAGIAYSDSCGSIRSETRIYADEATHIYFNGTESTDDNRSVRRVLDRYSSVFEEAFGTKTVSYSSQNFGILSGSSDAGAASIGAAILGLKPDLDPHDVENDLRAVSESAGRSLFGGLTITWSDGFHAYTEKILDPEAFSGYSIVAFAFDYQRNPSDVIHQNIVRSDLYPARKKHADEHAHMIKEYAKTNDIKGIFDLAQEDTEEYHSILRGVGVNVIRENMQKLISYLKLIRKDYWNAYIVTGGSNVYVAVESENADRLFSIENTFGSKKKMLRIVGGAWHRRPE.

Leu19 provides a ligand contact to substrate. ATP contacts are provided by residues 96–100 (YSSQN) and 105–108 (SGSS). Positions 140 and 144 each coordinate substrate. Arg185 and Ser188 together coordinate ATP.

It belongs to the GHMP kinase family. As to quaternary structure, homodimer.

It catalyses the reaction (R)-mevalonate + ATP = (R)-3-phosphomevalonate + ADP + H(+). The protein operates within isoprenoid biosynthesis; isopentenyl diphosphate biosynthesis via mevalonate pathway. In terms of biological role, catalyzes the phosphorylation of mevalonate (MVA) to yield mevalonate-3-phosphate. Functions in an alternative mevalonate pathway, only present in extreme acidophiles of the Thermoplasmatales order, which passes through mevalonate 3-phosphate rather than mevalonate 5-phosphate. The protein is Mevalonate 3-kinase of Thermoplasma acidophilum (strain ATCC 25905 / DSM 1728 / JCM 9062 / NBRC 15155 / AMRC-C165).